A 357-amino-acid polypeptide reads, in one-letter code: 3-isopropylmalate dehydrogenase (357 aa).

76 to 89 (GPKWDNEPSHNRPE) contacts NAD(+). Residues Arg96, Arg106, Arg135, and Asp223 each coordinate substrate. Residues Asp223, Asp247, and Asp251 each coordinate Mg(2+). Residue 281–293 (GSAPDIAGQDKAN) participates in NAD(+) binding.

The protein belongs to the isocitrate and isopropylmalate dehydrogenases family. LeuB type 1 subfamily. In terms of assembly, homodimer. Mg(2+) is required as a cofactor. Mn(2+) serves as cofactor.

Its subcellular location is the cytoplasm. It carries out the reaction (2R,3S)-3-isopropylmalate + NAD(+) = 4-methyl-2-oxopentanoate + CO2 + NADH. The protein operates within amino-acid biosynthesis; L-leucine biosynthesis; L-leucine from 3-methyl-2-oxobutanoate: step 3/4. Catalyzes the oxidation of 3-carboxy-2-hydroxy-4-methylpentanoate (3-isopropylmalate) to 3-carboxy-4-methyl-2-oxopentanoate. The product decarboxylates to 4-methyl-2 oxopentanoate. This chain is 3-isopropylmalate dehydrogenase, found in Helicobacter hepaticus (strain ATCC 51449 / 3B1).